A 284-amino-acid chain; its full sequence is Tropomyosin Per a 7.0103 (284 aa).

The stretch at 1–266 (MDAIKKKMQA…EDELVHEKEK (266 aa)) forms a coiled coil.

This sequence belongs to the tropomyosin family. As to quaternary structure, homodimer.

Tropomyosin, in association with the troponin complex, plays a central role in the calcium dependent regulation of muscle contraction. This Periplaneta americana (American cockroach) protein is Tropomyosin Per a 7.0103.